The sequence spans 212 residues: Peptide methionine sulfoxide reductase MsrA (212 aa).

Residue Cys-52 is part of the active site.

The protein belongs to the MsrA Met sulfoxide reductase family.

It catalyses the reaction L-methionyl-[protein] + [thioredoxin]-disulfide + H2O = L-methionyl-(S)-S-oxide-[protein] + [thioredoxin]-dithiol. It carries out the reaction [thioredoxin]-disulfide + L-methionine + H2O = L-methionine (S)-S-oxide + [thioredoxin]-dithiol. Its function is as follows. Has an important function as a repair enzyme for proteins that have been inactivated by oxidation. Catalyzes the reversible oxidation-reduction of methionine sulfoxide in proteins to methionine. The polypeptide is Peptide methionine sulfoxide reductase MsrA (Shigella boydii serotype 4 (strain Sb227)).